The following is a 264-amino-acid chain: MASSSAPRFRVYSKYLFLTYPECTLEPQYALDSLRTLLNKYEPLYIAAVRELHEDGSPHLHVLVQNKLRASITNPNALNLRMDTSPFSIFHPNIQAAKDCNQVRDYITKEVDSDVNTAEWGTFVAVSTPGRKDRDADMKQIIESSSSREEFLSMVCNRFPFEWSIRLKDFEYTARHLFPDPVATYTPEFPTESLICHETIESWKNEHLYSVSLESYILCTSTPADQAQSDLEWMDDYSRSHRGGISPSTSAGQPEQERLPGQGL.

The CRESS-DNA virus Rep endonuclease domain occupies 10–123 (RVYSKYLFLT…DVNTAEWGTF (114 aa)). The short motif at 17-20 (FLTY) is the RCR-1 element. Residues E51, H59, and H61 each contribute to the a divalent metal cation site. The RCR-2 motif lies at 59-61 (HLH). Y106 (for DNA cleavage activity) is an active-site residue. The RCR-3 signature appears at 106–109 (YITK). A divalent metal cation is bound at residue E110. Residues 173 to 185 (TARHLFPDPVATY) are oligomerization. The LXCXE motif, interaction with host RBR1 motif lies at 194–198 (LICHE). The disordered stretch occupies residues 237–264 (YSRSHRGGISPSTSAGQPEQERLPGQGL).

Belongs to the geminiviridae Rep protein family. Homooligomer. Interacts (via LXCXE domain) with host retinoblastoma-related protein 1 (RBR1), and may thereby deregulate the host cell cycle. Part of the C- and V-complexes which are RepA-Rep-DNA complexes involved in the c-sense and v-sense transcription. Mg(2+) serves as cofactor. It depends on Mn(2+) as a cofactor.

It localises to the host nucleus. The protein resides in the host cytoplasm. Implicated in enhancement of V-sense gene expression. Acts a an inhibitor of C-sense gene transcription. This chain is Replication-associated protein A, found in Wheat dwarf virus (isolate Sweden) (WDV).